The following is a 966-amino-acid chain: Alanine--tRNA ligase, cytoplasmic (966 aa).

Residues His604, His608, Cys723, and His727 each contribute to the Zn(2+) site.

The protein belongs to the class-II aminoacyl-tRNA synthetase family. In terms of assembly, monomer. Zn(2+) is required as a cofactor.

Its subcellular location is the cytoplasm. The enzyme catalyses tRNA(Ala) + L-alanine + ATP = L-alanyl-tRNA(Ala) + AMP + diphosphate. Functionally, catalyzes the attachment of alanine to tRNA(Ala) in a two-step reaction: alanine is first activated by ATP to form Ala-AMP and then transferred to the acceptor end of tRNA(Ala). Also edits incorrectly charged tRNA(Ala) via its editing domain. The chain is Alanine--tRNA ligase, cytoplasmic from Drosophila melanogaster (Fruit fly).